A 623-amino-acid chain; its full sequence is Chaperone protein DnaK (623 aa).

Threonine 174 is subject to Phosphothreonine; by autocatalysis. 2 disordered regions span residues 470-504 (ITIK…KEEV) and 578-623 (GGAQ…DPDK). Residues 481–504 (EEIKKMQKDAEEHAEEDKKRKEEV) are compositionally biased toward basic and acidic residues. Over residues 578–604 (GGAQGAAGQAGPQGAQGGQPNNDNGSS) the composition is skewed to low complexity. The segment covering 614–623 (GDFHKVDPDK) has biased composition (basic and acidic residues).

Belongs to the heat shock protein 70 family.

Its function is as follows. Acts as a chaperone. This Lactobacillus gasseri (strain ATCC 33323 / DSM 20243 / BCRC 14619 / CIP 102991 / JCM 1131 / KCTC 3163 / NCIMB 11718 / NCTC 13722 / AM63) protein is Chaperone protein DnaK.